Reading from the N-terminus, the 132-residue chain is Translation initiation factor 5A (132 aa).

Residue lysine 37 is modified to Hypusine.

The protein belongs to the eIF-5A family.

It localises to the cytoplasm. Its function is as follows. Functions by promoting the formation of the first peptide bond. The protein is Translation initiation factor 5A (eif5a) of Methanocaldococcus jannaschii (strain ATCC 43067 / DSM 2661 / JAL-1 / JCM 10045 / NBRC 100440) (Methanococcus jannaschii).